The sequence spans 218 residues: Heart- and neural crest derivatives-expressed protein 1 (218 aa).

Disordered regions lie at residues 1–23 (MNLV…HPAH), 56–112 (APDF…RTES), and 172–203 (ADGG…RIKG). Over residues 8 to 21 (AHHHHHHHHHHPHP) the composition is skewed to basic residues. The span at 68 to 92 (AAAAAASYGPDARPGQSPGRLEALG) shows a compositional bias: low complexity. The segment covering 95–107 (LGRRKGSGPKKER) has biased composition (basic residues). Residues 97-149 (RRKGSGPKKERRRTESINSAFAELRECIPNVPADTKLSKIKTLRLATSYIAYL) form the bHLH domain. A Phosphothreonine; by PLK4 modification is found at Thr-110. Ser-112 is modified (phosphoserine; by PLK4).

As to quaternary structure, efficient DNA binding requires dimerization with another bHLH protein. Forms homodimers and heterodimers with TCF3 gene products E12 and E47, HAND2 and HEY1, HEY2 and HEYL (hairy-related transcription factors). Interacts with MDFIC. Interacts with SOX15; the interaction enhances HAND1-induced differentiation of trophoblast giant cells. Post-translationally, phosphorylation by PLK4 disrupts the interaction with MDFIC and leads to translocation into the nucleoplasm, allowing dimerization and transcription factor activity.

Its subcellular location is the nucleus. The protein localises to the nucleoplasm. It localises to the nucleolus. In terms of biological role, transcription factor that plays an essential role in both trophoblast giant cell differentiation and in cardiac morphogenesis. Binds the DNA sequence 5'-NRTCTG-3' (non-canonical E-box). Acts as a transcriptional repressor of SOX15. In the adult, could be required for ongoing expression of cardiac-specific genes. In Bos taurus (Bovine), this protein is Heart- and neural crest derivatives-expressed protein 1 (HAND1).